A 265-amino-acid polypeptide reads, in one-letter code: Uronate dehydrogenase (265 aa).

Residues 12 to 13 (QL), 32 to 34 (DLS), 49 to 50 (DL), and 69 to 73 (LGGIS) contribute to the NAD(+) site. Substrate is bound by residues S73 and 109-111 (SNH). The active-site Proton acceptor is the Y134. Residue K138 coordinates NAD(+). S163 contributes to the substrate binding site. C164 provides a ligand contact to NAD(+). Residue R172 participates in substrate binding.

The protein belongs to the NAD(P)-dependent epimerase/dehydratase family. Homohexamer.

It catalyses the reaction beta-D-galacturonate + NAD(+) = D-galactaro-1,5-lactone + NADH + H(+). It carries out the reaction beta-D-glucuronate + NAD(+) = D-glucaro-1,5-lactone + NADH + H(+). It participates in carbohydrate acid metabolism; D-galacturonate degradation via prokaryotic oxidative pathway. Functionally, catalyzes the oxidation of D-galacturonate and D-glucuronate to galactarate and D-glucarate, respectively. In fact, in water solution the substrate D-galacturonate is predominantly in pyranosic form whose beta anomer is converted by the enzyme to D-galactaro-1,5-lactone; in solution, this reaction product rearranges to the more stable D-galactaro-1,4-lactone. Makes part of the oxidative degradation pathway of D-galacturonate, which allows A.tumefaciens to utilize D-galacturonate as a sole carbon source. Cannot use NADP(+) instead of NAD(+) as cosubstrate. Is not active on D-galactose, D-glucose, D-galactonate and D-gluconate. This is Uronate dehydrogenase (udh) from Agrobacterium fabrum (strain C58 / ATCC 33970) (Agrobacterium tumefaciens (strain C58)).